The chain runs to 270 residues: Putative phosphoenolpyruvate synthase regulatory protein (270 aa).

Position 154–161 (Gly-154–Thr-161) interacts with ADP.

It belongs to the pyruvate, phosphate/water dikinase regulatory protein family. PSRP subfamily.

It carries out the reaction [pyruvate, water dikinase] + ADP = [pyruvate, water dikinase]-phosphate + AMP + H(+). It catalyses the reaction [pyruvate, water dikinase]-phosphate + phosphate + H(+) = [pyruvate, water dikinase] + diphosphate. Its function is as follows. Bifunctional serine/threonine kinase and phosphorylase involved in the regulation of the phosphoenolpyruvate synthase (PEPS) by catalyzing its phosphorylation/dephosphorylation. This chain is Putative phosphoenolpyruvate synthase regulatory protein, found in Deinococcus geothermalis (strain DSM 11300 / CIP 105573 / AG-3a).